A 1408-amino-acid chain; its full sequence is DNA-directed RNA polymerase subunit beta' (1408 aa).

Zn(2+) is bound by residues C70, C72, C85, and C88. 3 residues coordinate Mg(2+): D460, D462, and D464. Positions 814, 887, 894, and 897 each coordinate Zn(2+).

Belongs to the RNA polymerase beta' chain family. In terms of assembly, the RNAP catalytic core consists of 2 alpha, 1 beta, 1 beta' and 1 omega subunit. When a sigma factor is associated with the core the holoenzyme is formed, which can initiate transcription. Requires Mg(2+) as cofactor. Zn(2+) serves as cofactor.

The enzyme catalyses RNA(n) + a ribonucleoside 5'-triphosphate = RNA(n+1) + diphosphate. Functionally, DNA-dependent RNA polymerase catalyzes the transcription of DNA into RNA using the four ribonucleoside triphosphates as substrates. The sequence is that of DNA-directed RNA polymerase subunit beta' from Hydrogenovibrio crunogenus (strain DSM 25203 / XCL-2) (Thiomicrospira crunogena).